The following is a 209-amino-acid chain: Ribosomal RNA large subunit methyltransferase E (209 aa).

Positions 63, 65, 83, 99, and 124 each coordinate S-adenosyl-L-methionine. The Proton acceptor role is filled by Lys164.

This sequence belongs to the class I-like SAM-binding methyltransferase superfamily. RNA methyltransferase RlmE family.

It is found in the cytoplasm. It catalyses the reaction uridine(2552) in 23S rRNA + S-adenosyl-L-methionine = 2'-O-methyluridine(2552) in 23S rRNA + S-adenosyl-L-homocysteine + H(+). Specifically methylates the uridine in position 2552 of 23S rRNA at the 2'-O position of the ribose in the fully assembled 50S ribosomal subunit. The sequence is that of Ribosomal RNA large subunit methyltransferase E from Shewanella baltica (strain OS223).